Here is a 376-residue protein sequence, read N- to C-terminus: Alcohol dehydrogenase class-3 (376 aa).

The residue at position 1 (Ser-1) is an N-acetylserine. Positions 47, 69, 99, 102, 105, 113, and 176 each coordinate Zn(2+).

The protein belongs to the zinc-containing alcohol dehydrogenase family. Class-III subfamily. In terms of assembly, homodimer. The cofactor is Zn(2+). Liver and gut.

The protein resides in the cytoplasm. The enzyme catalyses a primary alcohol + NAD(+) = an aldehyde + NADH + H(+). The catalysed reaction is a secondary alcohol + NAD(+) = a ketone + NADH + H(+). It carries out the reaction S-(hydroxymethyl)glutathione + NADP(+) = S-formylglutathione + NADPH + H(+). It catalyses the reaction S-(hydroxymethyl)glutathione + NAD(+) = S-formylglutathione + NADH + H(+). The enzyme catalyses S-nitrosoglutathione + NADH + H(+) = S-(hydroxysulfenamide)glutathione + NAD(+). Class-III ADH is remarkably ineffective in oxidizing ethanol, but it readily catalyzes the oxidation of long-chain primary alcohols and the oxidation of S-(hydroxymethyl) glutathione. Also acts as a S-nitroso-glutathione reductase by catalyzing the NADH-dependent reduction of S-nitrosoglutathione, thereby regulating protein S-nitrosylation. The polypeptide is Alcohol dehydrogenase class-3 (Myxine glutinosa (Atlantic hagfish)).